We begin with the raw amino-acid sequence, 501 residues long: Aspartate--tRNA ligase, cytoplasmic (501 aa).

The residue at position 52 (Thr-52) is a Phosphothreonine. At Lys-74 the chain carries N6-acetyllysine. Glu-229 contributes to the L-aspartate binding site. Residue Ser-249 is modified to Phosphoserine. The segment at 251–254 (QLYK) is aspartate. Arg-273 contacts L-aspartate. Residues 273-275 (RAE) and 281-283 (RHL) each bind ATP. Residue Lys-374 is modified to N6-acetyllysine. The segment at 411–415 (KQSNS) is binding site for the 3'-end of tRNA. ATP is bound at residue Glu-424. Ser-427 and Arg-431 together coordinate L-aspartate. 472–475 (GLER) serves as a coordination point for ATP. Thr-500 bears the Phosphothreonine; by PKA mark.

The protein belongs to the class-II aminoacyl-tRNA synthetase family. Type 2 subfamily. In terms of assembly, homodimer. Part of a multisubunit complex that groups tRNA ligases for Arg (RARS1), Asp (DARS1), Gln (QARS1), Ile (IARS1), Leu (LARS1), Lys (KARS1), Met (MARS1) the bifunctional ligase for Glu and Pro (EPRS1) and the auxiliary subunits AIMP1/p43, AIMP2/p38 and EEF1E1/p18.

The protein resides in the cytoplasm. It carries out the reaction tRNA(Asp) + L-aspartate + ATP = L-aspartyl-tRNA(Asp) + AMP + diphosphate. In terms of biological role, catalyzes the specific attachment of an amino acid to its cognate tRNA in a 2 step reaction: the amino acid (AA) is first activated by ATP to form AA-AMP and then transferred to the acceptor end of the tRNA. This is Aspartate--tRNA ligase, cytoplasmic (DARS1) from Bos taurus (Bovine).